The chain runs to 197 residues: dTTP/UTP pyrophosphatase (197 aa).

Catalysis depends on Asp70, which acts as the Proton acceptor.

Belongs to the Maf family. YhdE subfamily. The cofactor is a divalent metal cation.

Its subcellular location is the cytoplasm. The catalysed reaction is dTTP + H2O = dTMP + diphosphate + H(+). It carries out the reaction UTP + H2O = UMP + diphosphate + H(+). Its function is as follows. Nucleoside triphosphate pyrophosphatase that hydrolyzes dTTP and UTP. May have a dual role in cell division arrest and in preventing the incorporation of modified nucleotides into cellular nucleic acids. The sequence is that of dTTP/UTP pyrophosphatase (yceF) from Shigella dysenteriae serotype 1 (strain Sd197).